The chain runs to 682 residues: Tail-specific protease (682 aa).

Positions 1 to 22 (MNMFFRLTALAGLLAIAGQTFA) are cleaved as a signal peptide. Residues 238–322 (NTEMSLSLEG…SKVRLEILPA (85 aa)) enclose the PDZ domain. Residues Ser-452, Asp-463, and Lys-477 each act as charge relay system in the active site. Residues 635–650 (GKPELKKLDDLPKDYQ) are compositionally biased toward basic and acidic residues. Residues 635–654 (GKPELKKLDDLPKDYQEPDP) are disordered.

The protein belongs to the peptidase S41A family.

Its subcellular location is the cell inner membrane. It catalyses the reaction The enzyme shows specific recognition of a C-terminal tripeptide, Xaa-Yaa-Zaa, in which Xaa is preferably Ala or Leu, Yaa is preferably Ala or Tyr, and Zaa is preferably Ala, but then cleaves at a variable distance from the C-terminus. A typical cleavage is -Ala-Ala-|-Arg-Ala-Ala-Lys-Glu-Asn-Tyr-Ala-Leu-Ala-Ala.. Functionally, involved in the cleavage of a C-terminal peptide of 11 residues from the precursor form of penicillin-binding protein 3 (PBP3). May be involved in protection of the bacterium from thermal and osmotic stresses. The protein is Tail-specific protease (prc) of Escherichia coli (strain K12).